The primary structure comprises 291 residues: Gamma-sarcoglycan (291 aa).

The Cytoplasmic segment spans residues 1 to 37 (MVREQYTTATEGICIERPENQYVYKIGIYGWRKRCLY). The chain crosses the membrane as a helical; Signal-anchor for type II membrane protein span at residues 38–58 (LFVLLLLIILVVNLALTIWIL). Over 59–291 (KVMWFSPAGM…TCQEHNHICL (233 aa)) the chain is Extracellular. N-linked (GlcNAc...) asparagine glycosylation is present at N110. Disulfide bonds link C265/C290 and C267/C283.

The protein belongs to the sarcoglycan beta/delta/gamma/zeta family. In terms of assembly, interacts with the syntrophin SNTA1. Cross-link to form 2 major subcomplexes: one consisting of SGCB, SGCD and SGCG and the other consisting of SGCB and SGCD. The association between SGCB and SGCG is particularly strong while SGCA is loosely associated with the other sarcoglycans. Interacts with FLNC. As to expression, expressed in skeletal and heart muscle.

The protein localises to the cell membrane. It localises to the sarcolemma. Its subcellular location is the cytoplasm. It is found in the cytoskeleton. Functionally, component of the sarcoglycan complex, a subcomplex of the dystrophin-glycoprotein complex which forms a link between the F-actin cytoskeleton and the extracellular matrix. The sequence is that of Gamma-sarcoglycan (SGCG) from Homo sapiens (Human).